The following is a 329-amino-acid chain: Putative helicase 109L (329 aa).

The region spanning 105 to 259 (LTLLTQHKSC…LFDMFFGPEM (155 aa)) is the Helicase ATP-binding domain. Residue 118 to 125 (CYTGFGKT) participates in ATP binding. Positions 212–215 (DEAH) match the DEAH box motif.

The protein belongs to the DEAD box helicase family. DEAH subfamily.

In Invertebrate iridescent virus 3 (IIV-3), this protein is Putative helicase 109L.